We begin with the raw amino-acid sequence, 731 residues long: Putative beta-galactosidase (731 aa).

A signal peptide spans 1 to 29 (MLCGKENNVMKMMLVYVFVLITLISCVYG). Glutamate 187 (proton donor) is an active-site residue. Catalysis depends on glutamate 257, which acts as the Nucleophile.

Belongs to the glycosyl hydrolase 35 family. As to expression, senescing flower petals.

The catalysed reaction is Hydrolysis of terminal non-reducing beta-D-galactose residues in beta-D-galactosides.. The chain is Putative beta-galactosidase (CARSR12) from Dianthus caryophyllus (Carnation).